Reading from the N-terminus, the 287-residue chain is NAD-dependent protein deacylase sir-2.3 (287 aa).

One can recognise a Deacetylase sirtuin-type domain in the interval 10 to 287; that stretch reads TELCENSLKK…YRISDVLKEM (278 aa). Residues 35–55 and 116–119 each bind NAD(+); these read GAGI…VGLY and QNVD. Residue H134 is the Proton acceptor of the active site. Zn(2+)-binding residues include C142, C145, C196, and C199. NAD(+) contacts are provided by residues 236–238, 262–264, and I280; these read GTS and NIG.

The protein belongs to the sirtuin family. Class II subfamily. As to quaternary structure, interacts with pyc-1, pcca-1 and mccc-1. Zn(2+) is required as a cofactor. As to expression, ubiquitously expressed with high expression in the pharynx, body wall muscles and gonad. Strong expression in a subset of non-neuronal cells in the head.

Its subcellular location is the mitochondrion matrix. The protein localises to the mitochondrion. It carries out the reaction N(6)-acetyl-L-lysyl-[protein] + NAD(+) + H2O = 2''-O-acetyl-ADP-D-ribose + nicotinamide + L-lysyl-[protein]. Functionally, NAD-dependent protein deacylase. Catalyzes the NAD-dependent hydrolysis of acyl groups from lysine residues. Plays a role in oxidative stress resistance. Might promote neuronal cell death under ischemic conditions and cell death in touch neurons induced by mec-4 channel hyperactivation, possibly downstream of the insulin-like receptor daf-2. Might attenuate the reactive oxygen species (ROS) scavenging system, that eliminates ROS in ischemic conditions, under dietary deprivation and when glycolysis is blocked. The protein is NAD-dependent protein deacylase sir-2.3 (sir-2.3) of Caenorhabditis elegans.